A 259-amino-acid chain; its full sequence is Eukaryotic translation initiation factor 3 subunit J (259 aa).

Positions M1 to V70 are sufficient for interaction with EIF3B. A disordered region spans residues M1–P111. S12, S14, and S21 each carry phosphoserine. Positions E41 to E62 are enriched in acidic residues. Positions E63–K107 are enriched in basic and acidic residues. Positions K71–T136 form a coiled coil. A Glycyl lysine isopeptide (Lys-Gly) (interchain with G-Cter in SUMO2) cross-link involves residue K107. The residue at position 110 (T110) is a Phosphothreonine. S128 is subject to Phosphoserine. Positions S218–Y247 are disordered. The tract at residues Y244–M259 is promotes stable association with the 40S ribosome. Y255 is modified (phosphotyrosine).

The protein belongs to the eIF-3 subunit J family. Component of the eukaryotic translation initiation factor 3 (eIF-3) complex, which is composed of 13 subunits: EIF3A, EIF3B, EIF3C, EIF3D, EIF3E, EIF3F, EIF3G, EIF3H, EIF3I, EIF3J, EIF3K, EIF3L and EIF3M. The eIF-3 complex appears to include 3 stable modules: module A is composed of EIF3A, EIF3B, EIF3G and EIF3I; module B is composed of EIF3F, EIF3H, and EIF3M; and module C is composed of EIF3C, EIF3D, EIF3E, EIF3K and EIF3L. EIF3C of module C binds EIF3B of module A and EIF3H of module B, thereby linking the three modules. EIF3J is a labile subunit that binds to the eIF-3 complex via EIF3B. The eIF-3 complex interacts with RPS6KB1 under conditions of nutrient depletion. Mitogenic stimulation leads to binding and activation of a complex composed of MTOR and RPTOR, leading to phosphorylation and release of RPS6KB1 and binding of EIF4B to eIF-3. Phosphorylated. Phosphorylation is enhanced upon serum stimulation.

The protein resides in the cytoplasm. Its function is as follows. Component of the eukaryotic translation initiation factor 3 (eIF-3) complex, which is required for several steps in the initiation of protein synthesis. The eIF-3 complex associates with the 40S ribosome and facilitates the recruitment of eIF-1, eIF-1A, eIF-2:GTP:methionyl-tRNAi and eIF-5 to form the 43S pre-initiation complex (43S PIC). The eIF-3 complex stimulates mRNA recruitment to the 43S PIC and scanning of the mRNA for AUG recognition. The eIF-3 complex is also required for disassembly and recycling of post-termination ribosomal complexes and subsequently prevents premature joining of the 40S and 60S ribosomal subunits prior to initiation. The eIF-3 complex specifically targets and initiates translation of a subset of mRNAs involved in cell proliferation, including cell cycling, differentiation and apoptosis, and uses different modes of RNA stem-loop binding to exert either translational activation or repression. This subunit binds directly within the mRNA entry channel of the 40S ribosome to the aminoacyl (A) site. It may regulate the interaction between the 43S PIC and mRNA. In Rattus norvegicus (Rat), this protein is Eukaryotic translation initiation factor 3 subunit J (Eif3j).